The sequence spans 100 residues: uncharacterized protein (100 aa).

The next 3 membrane-spanning stretches (helical) occupy residues 11-33 (VWSI…SVLM), 45-64 (WMLA…SLVY), and 68-90 (WEGA…GYLI).

It localises to the cell membrane. This is an uncharacterized protein from Bacillus subtilis (strain 168).